A 224-amino-acid polypeptide reads, in one-letter code: Ribonuclease T (224 aa).

Residues 32 to 206 (VVVDVETGGF…YDTEKTAELF (175 aa)) form the Exonuclease domain. Positions 35, 37, 193, and 198 each coordinate Mg(2+). His193 acts as the Proton donor/acceptor in catalysis.

This sequence belongs to the RNase T family. As to quaternary structure, homodimer. Requires Mg(2+) as cofactor.

In terms of biological role, trims short 3' overhangs of a variety of RNA species, leaving a one or two nucleotide 3' overhang. Responsible for the end-turnover of tRNA: specifically removes the terminal AMP residue from uncharged tRNA (tRNA-C-C-A). Also appears to be involved in tRNA biosynthesis. In Pseudomonas aeruginosa (strain UCBPP-PA14), this protein is Ribonuclease T.